The following is a 227-amino-acid chain: Cytochrome c oxidase subunit 2 (227 aa).

Topologically, residues 1–14 (MAYPFQLGLQDATS) are mitochondrial intermembrane. Residues 15-45 (PIMEELTNFHDHTLMIVFLISSLVLYIISLM) form a helical membrane-spanning segment. The Mitochondrial matrix portion of the chain corresponds to 46 to 59 (LTTKLTHTSTMDAQ). A helical membrane pass occupies residues 60–87 (EVETIWTILPAVILILIALPSLRILYMM). Over 88–227 (DEINNPVLTV…HFENWSASMI (140 aa)) the chain is Mitochondrial intermembrane. Cu cation-binding residues include H161, C196, E198, C200, H204, and M207. E198 serves as a coordination point for Mg(2+).

Belongs to the cytochrome c oxidase subunit 2 family. As to quaternary structure, component of the cytochrome c oxidase (complex IV, CIV), a multisubunit enzyme composed of 14 subunits. The complex is composed of a catalytic core of 3 subunits MT-CO1, MT-CO2 and MT-CO3, encoded in the mitochondrial DNA, and 11 supernumerary subunits COX4I, COX5A, COX5B, COX6A, COX6B, COX6C, COX7A, COX7B, COX7C, COX8 and NDUFA4, which are encoded in the nuclear genome. The complex exists as a monomer or a dimer and forms supercomplexes (SCs) in the inner mitochondrial membrane with NADH-ubiquinone oxidoreductase (complex I, CI) and ubiquinol-cytochrome c oxidoreductase (cytochrome b-c1 complex, complex III, CIII), resulting in different assemblies (supercomplex SCI(1)III(2)IV(1) and megacomplex MCI(2)III(2)IV(2)). Found in a complex with TMEM177, COA6, COX18, COX20, SCO1 and SCO2. Interacts with TMEM177 in a COX20-dependent manner. Interacts with COX20. Interacts with COX16. Requires Cu cation as cofactor.

It localises to the mitochondrion inner membrane. The catalysed reaction is 4 Fe(II)-[cytochrome c] + O2 + 8 H(+)(in) = 4 Fe(III)-[cytochrome c] + 2 H2O + 4 H(+)(out). Functionally, component of the cytochrome c oxidase, the last enzyme in the mitochondrial electron transport chain which drives oxidative phosphorylation. The respiratory chain contains 3 multisubunit complexes succinate dehydrogenase (complex II, CII), ubiquinol-cytochrome c oxidoreductase (cytochrome b-c1 complex, complex III, CIII) and cytochrome c oxidase (complex IV, CIV), that cooperate to transfer electrons derived from NADH and succinate to molecular oxygen, creating an electrochemical gradient over the inner membrane that drives transmembrane transport and the ATP synthase. Cytochrome c oxidase is the component of the respiratory chain that catalyzes the reduction of oxygen to water. Electrons originating from reduced cytochrome c in the intermembrane space (IMS) are transferred via the dinuclear copper A center (CU(A)) of subunit 2 and heme A of subunit 1 to the active site in subunit 1, a binuclear center (BNC) formed by heme A3 and copper B (CU(B)). The BNC reduces molecular oxygen to 2 water molecules using 4 electrons from cytochrome c in the IMS and 4 protons from the mitochondrial matrix. This Batomys granti (Luzon hairy-tailed rat) protein is Cytochrome c oxidase subunit 2 (MT-CO2).